The primary structure comprises 506 residues: Cysteine--tRNA ligase (506 aa).

Cys34 serves as a coordination point for Zn(2+). The 'HIGH' region motif lies at 36 to 46; that stretch reads PTVYDFAHIGN. Residues Cys230, His269, and Glu273 each coordinate Zn(2+). A 'KMSKS' region motif is present at residues 302 to 306; sequence KMSKS. Residue Lys305 participates in ATP binding.

The protein belongs to the class-I aminoacyl-tRNA synthetase family. Monomer. Zn(2+) serves as cofactor.

The protein resides in the cytoplasm. It catalyses the reaction tRNA(Cys) + L-cysteine + ATP = L-cysteinyl-tRNA(Cys) + AMP + diphosphate. This is Cysteine--tRNA ligase from Brucella suis biovar 1 (strain 1330).